Reading from the N-terminus, the 556-residue chain is Genetic interactor of prohibitins 3, mitochondrial (556 aa).

A mitochondrion-targeting transit peptide spans 1–21; the sequence is MLNLCHALRGVRQFSCSVIVK. Residues 113-305 form the CP-type G domain; the sequence is ESTLNDILNY…LFDLPGYSTS (193 aa).

This sequence belongs to the TRAFAC class YlqF/YawG GTPase family. GEP3 subfamily.

Its subcellular location is the mitochondrion. Its function is as follows. Interacts genetically with prohibitins and thus may be involved in the mitochondrial lipid metabolism. This Saccharomyces cerevisiae (strain Lalvin EC1118 / Prise de mousse) (Baker's yeast) protein is Genetic interactor of prohibitins 3, mitochondrial (GEP3).